A 399-amino-acid chain; its full sequence is S-adenosylmethionine synthase (399 aa).

Residue histidine 17 participates in ATP binding. Aspartate 19 lines the Mg(2+) pocket. Residue glutamate 45 participates in K(+) binding. Residues glutamate 58 and glutamine 101 each contribute to the L-methionine site. The segment at 101 to 111 (QSADIAMGVDQ) is flexible loop. Residues 177 to 179 (DGK), 244 to 245 (RF), aspartate 253, 259 to 260 (RK), alanine 276, and lysine 280 each bind ATP. An L-methionine-binding site is contributed by aspartate 253. Lysine 284 is an L-methionine binding site.

Belongs to the AdoMet synthase family. As to quaternary structure, homotetramer; dimer of dimers. Mg(2+) is required as a cofactor. K(+) serves as cofactor.

The protein localises to the cytoplasm. It catalyses the reaction L-methionine + ATP + H2O = S-adenosyl-L-methionine + phosphate + diphosphate. It participates in amino-acid biosynthesis; S-adenosyl-L-methionine biosynthesis; S-adenosyl-L-methionine from L-methionine: step 1/1. Functionally, catalyzes the formation of S-adenosylmethionine (AdoMet) from methionine and ATP. The overall synthetic reaction is composed of two sequential steps, AdoMet formation and the subsequent tripolyphosphate hydrolysis which occurs prior to release of AdoMet from the enzyme. The polypeptide is S-adenosylmethionine synthase (Bacillus thuringiensis (strain Al Hakam)).